Reading from the N-terminus, the 2352-residue chain is Ectopic P granules protein 5 (2352 aa).

Disordered regions lie at residues M1–R112 and K1315–K1335. Residues D66–R81 show a composition bias toward basic and acidic residues.

The protein belongs to the EPG5 family. As to expression, expressed in pharyngeal and body wall muscles and intestine cells.

The protein resides in the cytoplasm. It localises to the cytoplasmic vesicle. It is found in the phagosome membrane. Functionally, involved in the maturation of autophagosomes into autolysosomes during starvation-induced autotrophy. Specifically, involved in the clearance of apoptotic cells by promoting the delivery of engulfed apoptotic cells to the lysosome. This chain is Ectopic P granules protein 5, found in Caenorhabditis elegans.